A 348-amino-acid chain; its full sequence is WRKY transcription factor WRKY71 (348 aa).

Residues 50-84 (VAALEAELKRMGAENRQLSEMLAAVAAKYEALQSQ) are a coiled coil. Disordered stretches follow at residues 91-141 (ASAN…APHH) and 246-287 (GEHN…APVV). Residues 102-114 (NQSSTSEGGSVSP) show a composition bias toward low complexity. Positions 116–122 (RKRKSES) match the Nuclear localization signal motif. Pro residues predominate over residues 126–136 (SPPPPPPPHPH). A DNA-binding region (WRKY) is located at residues 187-253 (DLSLVVKDGY…YEGEHNHGQP (67 aa)). The segment at 267–348 (SGKSAGKPPH…RILELSPTKD (82 aa)) is transcription repression of gibberellic acid (GA)-induced promoters. Positions 275–286 (PHAPAAAPPAPV) are enriched in pro residues.

The protein belongs to the WRKY group II-a family. In terms of assembly, interacts with WRKY51; this interaction promotes W box binding of the complex WRKY51/WRKY71 in a zinc ion-dependent manner. In terms of tissue distribution, highly expressed in aleurone cells. In seeds, predominantly present in the plumule, radicle and scutellum of the embryo. Expressed in roots, stems, young leaves and spikelets.

It localises to the nucleus. Transcription repressor. Interacts specifically with the W box (5'-(T)TGAC[CT]-3'), a frequently occurring elicitor-responsive cis-acting element. Represses specifically gibberellic acid (GA)-induced promoters in aleurone cells, probably by interfering with GAM1. Regulates, probably indirectly, the activation of defense-related genes such as GF14E during defense response. Modulates plant innate immunity against X.oryzae pv. oryzae (Xoo). Confers resistance to the virulent bacterial pathogen X.oryzae pv. oryzae (Xoo) 13751, probably via the regulation of NPR1 and PR1b defense signaling pathways. In Oryza sativa subsp. indica (Rice), this protein is WRKY transcription factor WRKY71.